We begin with the raw amino-acid sequence, 226 residues long: 7-cyano-7-deazaguanine synthase (226 aa).

11–21 (LSGGLDSATCL) lines the ATP pocket. C191, C201, C204, and C207 together coordinate Zn(2+).

This sequence belongs to the QueC family. The cofactor is Zn(2+).

The enzyme catalyses 7-carboxy-7-deazaguanine + NH4(+) + ATP = 7-cyano-7-deazaguanine + ADP + phosphate + H2O + H(+). It participates in purine metabolism; 7-cyano-7-deazaguanine biosynthesis. Catalyzes the ATP-dependent conversion of 7-carboxy-7-deazaguanine (CDG) to 7-cyano-7-deazaguanine (preQ(0)). This chain is 7-cyano-7-deazaguanine synthase, found in Aromatoleum aromaticum (strain DSM 19018 / LMG 30748 / EbN1) (Azoarcus sp. (strain EbN1)).